The primary structure comprises 648 residues: Sodium/nucleoside cotransporter 1 (648 aa).

The Cytoplasmic segment spans residues 1–80 (MADNTQRQRE…ARSFCREHRQ (80 aa)). Residues 81–104 (LFGWICKGLLSTACLGFLMVACLL) form a helical membrane-spanning segment. Residues 105–109 (DLQRA) are Extracellular-facing. Residues 110–128 (LALLIITCVVLVFLAYDLL) form a helical membrane-spanning segment. Residues 129-147 (KRLLGSKLRRCVKFQGHSC) lie on the Cytoplasmic side of the membrane. Residues 148 to 167 (LSLWLKRGLALAAGVGLILW) traverse the membrane as a helical segment. Residues 168 to 178 (LSLDTAQRPEQ) are Extracellular-facing. The chain crosses the membrane as a helical span at residues 179-195 (LVSFAGICVFLVLLFAG). Topologically, residues 196–201 (SKHHRA) are cytoplasmic. Residues 202–222 (VSWRAVSWGLGLQFVLGLFVI) traverse the membrane as a helical segment. At 223–261 (RTEPGFIAFQWLGDQIQVFLSYTEAGSSFVFGEALVKDV) the chain is on the extracellular side. A helical membrane pass occupies residues 262-283 (FAFQVLPIIIFFSCVMSVLYYL). Residues 284–294 (GLMQWVILKIA) are Cytoplasmic-facing. Residues 295 to 318 (WLMQVTMGTSATETLSVAGNIFVS) traverse the membrane as a helical segment. Residues 319 to 337 (QTEAPLLIRPYLADMTLSE) lie on the Extracellular side of the membrane. A helical membrane pass occupies residues 338–360 (VHVVMTGGYATIAGSLLGAYISF). Residues 361-366 (GIDAAS) lie on the Cytoplasmic side of the membrane. A helical transmembrane segment spans residues 367–386 (LIAASVMAAPCALALSKLVY). Residues 387-423 (PEVEESKFRSENGVKLTYGDAQNLLEAASAGAAISVK) are Extracellular-facing. The helical transmembrane segment at 424 to 446 (VVANIAANLIAFLAVLAFVNAAL) threads the bilayer. At 447 to 457 (SWLGDMVDIQG) the chain is on the cytoplasmic side. Residues 458 to 479 (LSFQLICSYVLRPVAFLMGVAW) traverse the membrane as a helical segment. At 480-534 (EDCPVVAELLGIKFFLNEFVAYQELSQYKQRRLAGAEEWLGDKKQWISVRAEILT) the chain is on the extracellular side. Residues 535-558 (TYALCGFANFSSIGIMLGGLTSLV) form a helical membrane-spanning segment. The Cytoplasmic portion of the chain corresponds to 559–569 (PQRRSDFSQIV). Residues 570-592 (LRALITGAFVSLLNACVAGILYV) traverse the membrane as a helical segment. Over 593–648 (PRGVEVDCVSLLNQTVSSSSFEVYLCCRQVFQSTSSEFSQVALDNCCRFYNHTVCT) the chain is Extracellular. 2 N-linked (GlcNAc...) asparagine glycosylation sites follow: Asn-605 and Asn-643.

This sequence belongs to the concentrative nucleoside transporter (CNT) (TC 2.A.41) family. N-glycosylated. N-glycosylation is required for localization to the plasma membrane and the transporter activity. In terms of tissue distribution, expressed predominantly in the brush-border membranes of the polarized epithelial cells of jejunum and renal cortical tubules and in the bile canalicular membranes of liver parenchymal cells.

It is found in the cell membrane. Its subcellular location is the apical cell membrane. It catalyses the reaction uridine(out) + Na(+)(out) = uridine(in) + Na(+)(in). The catalysed reaction is thymidine(out) + Na(+)(out) = thymidine(in) + Na(+)(in). It carries out the reaction cytidine(out) + Na(+)(out) = cytidine(in) + Na(+)(in). The enzyme catalyses adenosine(out) + Na(+)(out) = adenosine(in) + Na(+)(in). Due to its high apparent affinity but slow transport, adenosine could act as a negative regulator of pyrimidine transport under some conditions. In terms of biological role, sodium and pyrimidine nucleoside symporter of the plasma membrane that imports uridine, thymidine and cytidine into cells by coupling their transport to the transmembrane sodium electrochemical gradient. Also transports adenosine, an atypical substrate transported with high apparent affinity, but low maximum velocity. Therefore, exhibits the transport characteristics of the nucleoside transport system cit or N2 subtype (N2/cit). Involved in renal nucleoside (re)absorption. The chain is Sodium/nucleoside cotransporter 1 from Rattus norvegicus (Rat).